Reading from the N-terminus, the 89-residue chain is Small ribosomal subunit protein uS17 (89 aa).

It belongs to the universal ribosomal protein uS17 family. As to quaternary structure, part of the 30S ribosomal subunit.

In terms of biological role, one of the primary rRNA binding proteins, it binds specifically to the 5'-end of 16S ribosomal RNA. The polypeptide is Small ribosomal subunit protein uS17 (Aromatoleum aromaticum (strain DSM 19018 / LMG 30748 / EbN1) (Azoarcus sp. (strain EbN1))).